The primary structure comprises 305 residues: N-acetylmuramic acid 6-phosphate etherase (305 aa).

One can recognise an SIS domain in the interval 59–222; it reads TSKALGKGGR…STGVMVKLGK (164 aa). The active-site Proton donor is the Glu87. Residue Glu118 is part of the active site.

Belongs to the GCKR-like family. MurNAc-6-P etherase subfamily. As to quaternary structure, homodimer.

The enzyme catalyses N-acetyl-D-muramate 6-phosphate + H2O = N-acetyl-D-glucosamine 6-phosphate + (R)-lactate. Its pathway is amino-sugar metabolism; N-acetylmuramate degradation. Its function is as follows. Specifically catalyzes the cleavage of the D-lactyl ether substituent of MurNAc 6-phosphate, producing GlcNAc 6-phosphate and D-lactate. The polypeptide is N-acetylmuramic acid 6-phosphate etherase (Crocosphaera subtropica (strain ATCC 51142 / BH68) (Cyanothece sp. (strain ATCC 51142))).